The following is a 76-amino-acid chain: Conotoxin Lt6.1 (76 aa).

The first 22 residues, 1 to 22 (MKLTCVLIIAVLFLMDNQLITA), serve as a signal peptide directing secretion. The propeptide occupies 23–48 (DYPRDEQVYRAVRLRDAMQKSKGSGS). Disulfide bonds link cysteine 49/cysteine 62, cysteine 56/cysteine 67, and cysteine 61/cysteine 75.

This sequence belongs to the conotoxin O1 superfamily. Expressed by the venom duct.

The protein resides in the secreted. The polypeptide is Conotoxin Lt6.1 (Conus litteratus (Lettered cone)).